The primary structure comprises 443 residues: ATP-dependent protease ATPase subunit HslU (443 aa).

ATP is bound by residues Ile20, 62–67 (GVGKTE), Asp255, Glu321, and Arg393.

This sequence belongs to the ClpX chaperone family. HslU subfamily. As to quaternary structure, a double ring-shaped homohexamer of HslV is capped on each side by a ring-shaped HslU homohexamer. The assembly of the HslU/HslV complex is dependent on binding of ATP.

Its subcellular location is the cytoplasm. ATPase subunit of a proteasome-like degradation complex; this subunit has chaperone activity. The binding of ATP and its subsequent hydrolysis by HslU are essential for unfolding of protein substrates subsequently hydrolyzed by HslV. HslU recognizes the N-terminal part of its protein substrates and unfolds these before they are guided to HslV for hydrolysis. The sequence is that of ATP-dependent protease ATPase subunit HslU from Helicobacter pylori (strain G27).